Reading from the N-terminus, the 1035-residue chain is DNA polymerase catalytic subunit (1035 aa).

The protein belongs to the DNA polymerase type-B family.

The protein resides in the host nucleus. It carries out the reaction DNA(n) + a 2'-deoxyribonucleoside 5'-triphosphate = DNA(n+1) + diphosphate. The sequence is that of DNA polymerase catalytic subunit (UL54) from Macaca mulatta (Rhesus macaque).